Here is a 198-residue protein sequence, read N- to C-terminus: Large ribosomal subunit protein bL25 (198 aa).

This sequence belongs to the bacterial ribosomal protein bL25 family. CTC subfamily. In terms of assembly, part of the 50S ribosomal subunit; part of the 5S rRNA/L5/L18/L25 subcomplex. Contacts the 5S rRNA. Binds to the 5S rRNA independently of L5 and L18.

Its function is as follows. This is one of the proteins that binds to the 5S RNA in the ribosome where it forms part of the central protuberance. This is Large ribosomal subunit protein bL25 from Pseudomonas putida (strain W619).